We begin with the raw amino-acid sequence, 87 residues long: MNLEPPKAEIRSATRVIGGPVTPRKGPPKFKQRQTRQFKSKPPKKGVQGFGDDIPGMEGLGTDITVICPWEAFNHLELHELAQYGII.

The residue at position 1 (M1) is an N-acetylmethionine. Over residues 1-12 the composition is skewed to basic and acidic residues; sequence MNLEPPKAEIRS. Positions 1 to 55 are disordered; the sequence is MNLEPPKAEIRSATRVIGGPVTPRKGPPKFKQRQTRQFKSKPPKKGVQGFGDDIP. The span at 26–44 shows a compositional bias: basic residues; it reads GPPKFKQRQTRQFKSKPPK.

It belongs to the rod/cone cGMP-PDE gamma subunit family. In terms of assembly, oligomer composed of two catalytic chains (alpha and beta), an inhibitory chain (gamma) and the delta chain.

It carries out the reaction 3',5'-cyclic GMP + H2O = GMP + H(+). Functionally, participates in processes of transmission and amplification of the visual signal. cGMP-PDEs are the effector molecules in G-protein-mediated phototransduction in vertebrate rods and cones. The polypeptide is Retinal rod rhodopsin-sensitive cGMP 3',5'-cyclic phosphodiesterase subunit gamma (PDE6G) (Canis lupus familiaris (Dog)).